A 230-amino-acid polypeptide reads, in one-letter code: Uracil-DNA glycosylase (230 aa).

Residue Asp70 is the Proton acceptor of the active site.

The protein belongs to the uracil-DNA glycosylase (UDG) superfamily. UNG family.

It localises to the cytoplasm. It carries out the reaction Hydrolyzes single-stranded DNA or mismatched double-stranded DNA and polynucleotides, releasing free uracil.. In terms of biological role, excises uracil residues from the DNA which can arise as a result of misincorporation of dUMP residues by DNA polymerase or due to deamination of cytosine. This is Uracil-DNA glycosylase from Pseudomonas putida (strain GB-1).